The chain runs to 763 residues: MRQTPLLQLALLLSLPRSLGGKGCPSPPCECHQEDDFRVTCKDIHRIPSLPPSTQTLKFIETHLKTIPSRAFSNLPNISRIYLSIDATLQRLESHSFYNLSKMTHIEIRNTRSLTYIDPGALKELPLLKFLGIFNTGLGVFPDLTKVYSTDVFFILEITDNPYMTSIPANAFQGLCNETLTLKLYNNGFTSIQGHAFNGTKLDAVYLNKNKYLTAIDQDAFGGVYSGPTLLDVSYTSVTALPSKGLEHLKELIARNTWTLKKLPLTLSFLHLTRADLSYPSHCCAFKNQKKIRGILESFMCNDSSIRSLRQRKSVNALNGPFDQEYEEYLGDSHAGYKDNSKFQDTRSNSHYYVFFEEQDEILGFGQELKNPQEETLQAFDSHYDYTVCGGNEDMVCTPKSDEFNPCEDIMGYKFLRIVVWFVSLLALLGNVFVLIILLTSHYKLTVPRFLMCNLAFADFCMGMYLLLIASVDLYTHSEYYNHAIDWQTGPGCNAAGFFTVFASELSVYTLTVITLERWYAITFAMRLDRKMRLRHAYAIMVGGWVCCFLLALLPLVGISSYAKVSICLPMDTETPLALAYIILVLLLNIVAFIIVCSCYVKIYITVRNPQYNTGDKDTKIAKRMAVLIFTDFMCMAPISFYALSALMNKPLITVTNSKILLVLFYPLNSCANPFLYAIFTKTFQRDVFILLSKFGICKRQAQAYRGQRVSPKNSTGIQVQKVTRNMRQSLPNMQDDYELLENSHLTPNKQSHISKEYNQTVL.

Residues 1–21 form the signal peptide; that stretch reads MRQTPLLQLALLLSLPRSLGG. Residues 22–412 lie on the Extracellular side of the membrane; the sequence is KGCPSPPCEC…EFNPCEDIMG (391 aa). Cys-31 and Cys-41 are disulfide-bonded. Asn-77 and Asn-99 each carry an N-linked (GlcNAc...) asparagine glycan. 7 LRR repeats span residues 100–124, 125–150, 151–174, 176–199, 201–223, 225–248, and 264–288; these read LSKM…ALKE, LPLL…VYST, DVFF…AFQG, CNET…AFNG, KLDA…AFGG, YSGP…GLEH, and PLTL…AFKN. 2 N-linked (GlcNAc...) asparagine glycosylation sites follow: Asn-177 and Asn-198. Asn-302 is a glycosylation site (N-linked (GlcNAc...) asparagine). Sulfotyrosine is present on Tyr-384. The helical transmembrane segment at 413 to 440 threads the bilayer; sequence YKFLRIVVWFVSLLALLGNVFVLIILLT. At 441-449 the chain is on the cytoplasmic side; it reads SHYKLTVPR. The helical transmembrane segment at 450-472 threads the bilayer; that stretch reads FLMCNLAFADFCMGMYLLLIASV. Over 473 to 493 the chain is Extracellular; it reads DLYTHSEYYNHAIDWQTGPGC. Cysteines 493 and 568 form a disulfide. The helical transmembrane segment at 494 to 516 threads the bilayer; the sequence is NAAGFFTVFASELSVYTLTVITL. Residues 517–536 are Cytoplasmic-facing; sequence ERWYAITFAMRLDRKMRLRH. The helical transmembrane segment at 537-559 threads the bilayer; sequence AYAIMVGGWVCCFLLALLPLVGI. At 560–579 the chain is on the extracellular side; it reads SSYAKVSICLPMDTETPLAL. Residues 580–601 form a helical membrane-spanning segment; that stretch reads AYIILVLLLNIVAFIIVCSCYV. Topologically, residues 602–624 are cytoplasmic; sequence KIYITVRNPQYNTGDKDTKIAKR. A helical transmembrane segment spans residues 625–648; sequence MAVLIFTDFMCMAPISFYALSALM. Topologically, residues 649-659 are extracellular; it reads NKPLITVTNSK. Residues 660 to 681 form a helical membrane-spanning segment; it reads ILLVLFYPLNSCANPFLYAIFT. Over 682 to 763 the chain is Cytoplasmic; that stretch reads KTFQRDVFIL…ISKEYNQTVL (82 aa). The short motif at 761–763 is the PDZ-binding element; sequence TVL.

It belongs to the G-protein coupled receptor 1 family. FSH/LSH/TSH subfamily. As to quaternary structure, interacts with heterodimer GPHA2:GPHB5; this interaction stimulates cAMP production. Interacts (via the PDZ-binding motif) with SCRIB; regulates TSHR trafficking and function. In terms of processing, glycosylated. Sulfated. Sulfation on Tyr-384 plays a role in thyrotropin receptor binding and activation.

It is found in the cell membrane. It localises to the basolateral cell membrane. Its function is as follows. Receptor for the thyroid-stimulating hormone (TSH) or thyrotropin. Also acts as a receptor for the heterodimeric glycoprotein hormone (GPHA2:GPHB5) or thyrostimulin. The activity of this receptor is mediated by G proteins which activate adenylate cyclase. Plays a central role in controlling thyroid cell metabolism. The protein is Thyrotropin receptor (TSHR) of Felis catus (Cat).